The primary structure comprises 393 residues: Beta-1,4-galactosyltransferase 3 (393 aa).

At 1-10 (MLRRLLERPC) the chain is on the cytoplasmic side. The chain crosses the membrane as a helical; Signal-anchor for type II membrane protein span at residues 11 to 31 (TLALLVGSQLAVMMYLSLGGF). The Lumenal portion of the chain corresponds to 32–393 (RSLSALFGRD…ANHTALRGSH (362 aa)). N-linked (GlcNAc...) asparagine glycosylation is present at Asn57. An intrachain disulfide couples Cys77 to Cys119. 130-134 (PHRAR) contributes to the UDP-alpha-D-galactose binding site. The N-linked (GlcNAc...) asparagine glycan is linked to Asn166. Residues 169 to 171 (FNR), 196 to 197 (VD), Tyr226, and Trp258 contribute to the UDP-alpha-D-galactose site. Cys190 and Cys209 are disulfide-bonded. Asp197 lines the Mn(2+) pocket. Residue 260-263 (GEDD) coordinates N-acetyl-D-glucosamine. His291 provides a ligand contact to Mn(2+). 291–293 (HRG) provides a ligand contact to UDP-alpha-D-galactose. Arg303 contributes to the N-acetyl-D-glucosamine binding site. N-linked (GlcNAc...) asparagine glycans are attached at residues Asn337 and Asn385. The disordered stretch occupies residues 339–393 (TADIGTDPRGPRAPSGPRYPPGSSQAFRQEMLQRRPPARPGPPPTANHTALRGSH).

The protein belongs to the glycosyltransferase 7 family. Mn(2+) is required as a cofactor.

It localises to the golgi apparatus. The protein localises to the golgi stack membrane. The catalysed reaction is an N-acetyl-beta-D-glucosaminyl derivative + UDP-alpha-D-galactose = a beta-D-galactosyl-(1-&gt;4)-N-acetyl-beta-D-glucosaminyl derivative + UDP + H(+). It carries out the reaction N-acetyl-D-glucosamine + UDP-alpha-D-galactose = beta-D-galactosyl-(1-&gt;4)-N-acetyl-D-glucosamine + UDP + H(+). The enzyme catalyses a beta-D-GlcNAc-(1-&gt;3)-beta-D-Gal-(1-&gt;4)-beta-D-Glc-(1&lt;-&gt;1)-Cer(d18:1(4E)) + UDP-alpha-D-galactose = a neolactoside nLc4Cer(d18:1(4E)) + UDP + H(+). It catalyses the reaction a beta-D-glucosylceramide + UDP-alpha-D-galactose = a beta-D-galactosyl-(1-&gt;4)-beta-D-glucosyl-(1&lt;-&gt;1)-ceramide + UDP + H(+). The catalysed reaction is a neolactoside IV(3)-beta-GlcNAc-nLc4Cer + UDP-alpha-D-galactose = a neolactoside nLc6Cer + UDP + H(+). It participates in protein modification; protein glycosylation. Its function is as follows. Responsible for the synthesis of complex-type N-linked oligosaccharides in many glycoproteins as well as the carbohydrate moieties of glycolipids. The protein is Beta-1,4-galactosyltransferase 3 (B4GALT3) of Pongo abelii (Sumatran orangutan).